The primary structure comprises 297 residues: 4-hydroxy-tetrahydrodipicolinate synthase (297 aa).

Residue Thr55 coordinates pyruvate. The active-site Proton donor/acceptor is the Tyr144. Lys172 (schiff-base intermediate with substrate) is an active-site residue. Ile213 contributes to the pyruvate binding site.

It belongs to the DapA family. Homotetramer; dimer of dimers.

The protein localises to the cytoplasm. It carries out the reaction L-aspartate 4-semialdehyde + pyruvate = (2S,4S)-4-hydroxy-2,3,4,5-tetrahydrodipicolinate + H2O + H(+). It participates in amino-acid biosynthesis; L-lysine biosynthesis via DAP pathway; (S)-tetrahydrodipicolinate from L-aspartate: step 3/4. Catalyzes the condensation of (S)-aspartate-beta-semialdehyde [(S)-ASA] and pyruvate to 4-hydroxy-tetrahydrodipicolinate (HTPA). In Lactococcus lactis subsp. lactis (strain IL1403) (Streptococcus lactis), this protein is 4-hydroxy-tetrahydrodipicolinate synthase.